A 522-amino-acid polypeptide reads, in one-letter code: 2-isopropylmalate synthase (522 aa).

The Pyruvate carboxyltransferase domain occupies 5–267 (VIIFDTTLRD…HTRINHQEIY (263 aa)). Mn(2+) contacts are provided by aspartate 14, histidine 202, histidine 204, and asparagine 238. The segment at 392–522 (RLDTFNVQSG…SQVKDQKETV (131 aa)) is regulatory domain.

This sequence belongs to the alpha-IPM synthase/homocitrate synthase family. LeuA type 1 subfamily. In terms of assembly, homodimer. Requires Mn(2+) as cofactor.

It localises to the cytoplasm. It carries out the reaction 3-methyl-2-oxobutanoate + acetyl-CoA + H2O = (2S)-2-isopropylmalate + CoA + H(+). It participates in amino-acid biosynthesis; L-leucine biosynthesis; L-leucine from 3-methyl-2-oxobutanoate: step 1/4. Functionally, catalyzes the condensation of the acetyl group of acetyl-CoA with 3-methyl-2-oxobutanoate (2-ketoisovalerate) to form 3-carboxy-3-hydroxy-4-methylpentanoate (2-isopropylmalate). The protein is 2-isopropylmalate synthase of Erwinia tasmaniensis (strain DSM 17950 / CFBP 7177 / CIP 109463 / NCPPB 4357 / Et1/99).